A 394-amino-acid polypeptide reads, in one-letter code: Elongation factor Tu (394 aa).

The region spanning 10–204 is the tr-type G domain; the sequence is KPHVNVGTIG…ALDTYIPEPE (195 aa). A G1 region spans residues 19–26; the sequence is GHVDHGKT. 19 to 26 is a GTP binding site; sequence GHVDHGKT. Threonine 26 is a Mg(2+) binding site. The segment at 60–64 is G2; it reads GITIN. The segment at 81–84 is G3; that stretch reads DCPG. Residues 81 to 85 and 136 to 139 contribute to the GTP site; these read DCPGH and NKCD. Residues 136-139 are G4; sequence NKCD. The G5 stretch occupies residues 174 to 176; it reads SAL.

The protein belongs to the TRAFAC class translation factor GTPase superfamily. Classic translation factor GTPase family. EF-Tu/EF-1A subfamily. As to quaternary structure, monomer.

The protein localises to the cytoplasm. The catalysed reaction is GTP + H2O = GDP + phosphate + H(+). Its function is as follows. GTP hydrolase that promotes the GTP-dependent binding of aminoacyl-tRNA to the A-site of ribosomes during protein biosynthesis. The chain is Elongation factor Tu from Shewanella sediminis (strain HAW-EB3).